The primary structure comprises 1722 residues: Lymphocyte antigen 75 (1722 aa).

A signal peptide spans 1–27 (MGTRRVTPGCAAGLLVLLLRCFGLAEP). Residues 28–1666 (SEFSGDDSFT…VVCKVPLSPD (1639 aa)) lie on the Extracellular side of the membrane. The Ricin B-type lectin domain maps to 32-182 (GDDSFTIVNE…FLVGETWHHD (151 aa)). N135 is a glycosylation site (N-linked (GlcNAc...) asparagine). In terms of domain architecture, Fibronectin type-II spans 164-211 (SYGRPCEFPFLVGETWHHDCIRDENHSGPWCATTLNYEYDQKWGICLK). 4 disulfide bridges follow: C169–C194, C183–C209, C247–C340, and C317–C332. Positions 225 to 341 (QIGSCYQFNN…CEAQQPYVCK (117 aa)) constitute a C-type lectin 1 domain. N-linked (GlcNAc...) asparagine glycans are attached at residues N345 and N377. C-type lectin domains are found at residues 368–486 (QNGF…YVCK), 493–625 (NDTR…ICKK), and 652–791 (SNLS…WVCQ). 2 disulfides stabilise this stretch: C389/C485 and C462/C477. A glycan (N-linked (GlcNAc...) asparagine) is linked at N529. 3 cysteine pairs are disulfide-bonded: C597–C614, C678–C790, and C752–C782. N843 and N865 each carry an N-linked (GlcNAc...) asparagine glycan. A Phosphotyrosine modification is found at Y933. Residues N934 and N1076 are each glycosylated (N-linked (GlcNAc...) asparagine). 2 consecutive C-type lectin domains span residues 958-1091 (FQNK…LCQK) and 1110-1222 (YLNN…ICYY). 2 disulfide bridges follow: C1060-C1080 and C1197-C1211. N-linked (GlcNAc...) asparagine glycans are attached at residues N1225, N1320, and N1392. Positions 1251-1374 (FQNSCYNFMI…VIDETLHFYQ (124 aa)) constitute a C-type lectin 7 domain. C-type lectin domains lie at 1401–1513 (YEDG…ICYK) and 1542–1661 (YGDH…VCKV). C1488 and C1502 are oxidised to a cystine. N-linked (GlcNAc...) asparagine glycans are attached at residues N1593 and N1626. Cysteines 1635 and 1650 form a disulfide. A helical membrane pass occupies residues 1667–1691 (YRGIAVLFAVLSVLALISGLIWFLV). The Cytoplasmic segment spans residues 1692–1722 (QRNHFRWTGLSSVRYEHGANEDEVMLPSFHD). S1703 and S1719 each carry phosphoserine.

Expressed in the thymus and cultured bone marrow cells.

The protein resides in the membrane. Its function is as follows. Acts as an endocytic receptor to direct captured antigens from the extracellular space to a specialized antigen-processing compartment. Causes reduced proliferation of B lymphocytes. In Mesocricetus auratus (Golden hamster), this protein is Lymphocyte antigen 75 (LY75).